Consider the following 445-residue polypeptide: Phosphoglucosamine mutase (445 aa).

Residue Ser-99 is the Phosphoserine intermediate of the active site. The Mg(2+) site is built by Ser-99, Asp-242, Asp-244, and Asp-246. Ser-99 carries the post-translational modification Phosphoserine.

It belongs to the phosphohexose mutase family. Mg(2+) is required as a cofactor. Post-translationally, activated by phosphorylation.

The catalysed reaction is alpha-D-glucosamine 1-phosphate = D-glucosamine 6-phosphate. Functionally, catalyzes the conversion of glucosamine-6-phosphate to glucosamine-1-phosphate. The polypeptide is Phosphoglucosamine mutase (Helicobacter acinonychis (strain Sheeba)).